The primary structure comprises 89 residues: Protein YxiC (89 aa).

This Bacillus subtilis (strain 168) protein is Protein YxiC (yxiC).